Reading from the N-terminus, the 114-residue chain is Photosystem II reaction center Psb28 protein (114 aa).

Belongs to the Psb28 family. In terms of assembly, part of the photosystem II complex.

Its subcellular location is the cellular thylakoid membrane. In Rippkaea orientalis (strain PCC 8801 / RF-1) (Cyanothece sp. (strain PCC 8801)), this protein is Photosystem II reaction center Psb28 protein.